Reading from the N-terminus, the 87-residue chain is Translation initiation factor IF-1 (87 aa).

One can recognise an S1-like domain in the interval 16 to 87; the sequence is LSKEDVIEME…TKGRISYRHK (72 aa).

It belongs to the IF-1 family. In terms of assembly, component of the 30S ribosomal translation pre-initiation complex which assembles on the 30S ribosome in the order IF-2 and IF-3, IF-1 and N-formylmethionyl-tRNA(fMet); mRNA recruitment can occur at any time during PIC assembly.

The protein localises to the cytoplasm. In terms of biological role, one of the essential components for the initiation of protein synthesis. Stabilizes the binding of IF-2 and IF-3 on the 30S subunit to which N-formylmethionyl-tRNA(fMet) subsequently binds. Helps modulate mRNA selection, yielding the 30S pre-initiation complex (PIC). Upon addition of the 50S ribosomal subunit IF-1, IF-2 and IF-3 are released leaving the mature 70S translation initiation complex. This is Translation initiation factor IF-1 from Magnetococcus marinus (strain ATCC BAA-1437 / JCM 17883 / MC-1).